We begin with the raw amino-acid sequence, 945 residues long: Bifunctional glutamine synthetase adenylyltransferase/adenylyl-removing enzyme (945 aa).

An adenylyl removase region spans residues Met1–Glu440. Positions Ala449–Ala945 are adenylyl transferase.

Belongs to the GlnE family. Mg(2+) is required as a cofactor.

It carries out the reaction [glutamine synthetase]-O(4)-(5'-adenylyl)-L-tyrosine + phosphate = [glutamine synthetase]-L-tyrosine + ADP. The catalysed reaction is [glutamine synthetase]-L-tyrosine + ATP = [glutamine synthetase]-O(4)-(5'-adenylyl)-L-tyrosine + diphosphate. In terms of biological role, involved in the regulation of glutamine synthetase GlnA, a key enzyme in the process to assimilate ammonia. When cellular nitrogen levels are high, the C-terminal adenylyl transferase (AT) inactivates GlnA by covalent transfer of an adenylyl group from ATP to specific tyrosine residue of GlnA, thus reducing its activity. Conversely, when nitrogen levels are low, the N-terminal adenylyl removase (AR) activates GlnA by removing the adenylyl group by phosphorolysis, increasing its activity. The regulatory region of GlnE binds the signal transduction protein PII (GlnB) which indicates the nitrogen status of the cell. This Klebsiella pneumoniae subsp. pneumoniae (strain ATCC 700721 / MGH 78578) protein is Bifunctional glutamine synthetase adenylyltransferase/adenylyl-removing enzyme.